The sequence spans 712 residues: Ribosomal RNA large subunit methyltransferase K/L (712 aa).

One can recognise a THUMP domain in the interval 46–157 (GAYQALLHSR…REKLIVSLDL (112 aa)).

This sequence belongs to the methyltransferase superfamily. RlmKL family.

Its subcellular location is the cytoplasm. The enzyme catalyses guanosine(2445) in 23S rRNA + S-adenosyl-L-methionine = N(2)-methylguanosine(2445) in 23S rRNA + S-adenosyl-L-homocysteine + H(+). It catalyses the reaction guanosine(2069) in 23S rRNA + S-adenosyl-L-methionine = N(2)-methylguanosine(2069) in 23S rRNA + S-adenosyl-L-homocysteine + H(+). Its function is as follows. Specifically methylates the guanine in position 2445 (m2G2445) and the guanine in position 2069 (m7G2069) of 23S rRNA. The chain is Ribosomal RNA large subunit methyltransferase K/L from Haemophilus ducreyi (strain 35000HP / ATCC 700724).